Here is a 252-residue protein sequence, read N- to C-terminus: MVKVVVSGALGRMGTNIGRIVDEAPDMELVGGIDVREGTLFKTEVVPAAKIDAFLNEKKPDVLIDFTVAGAAVENIKAAARNGVALIVGTTGFSPEQRETIAAAVEGNVPAVISSNFSVGVNIFWKLVREAARELGDYDVEVTEAHHRYKKDAPSGTAKTILEILDQELGSREKAYGRVGETERKDEIGVHVIRGGDIVGDHSVLFAGNFECIEVSHRAYDRAVFAQGAVRAARWVVGREPRIYGMQDVLGL.

Gly8 to Met13 serves as a coordination point for NAD(+). Position 36 (Arg36) interacts with NADP(+). Residues Gly89–Thr91 and Ser114–Phe117 contribute to the NAD(+) site. The Proton donor/acceptor role is filled by His146. Position 147 (His147) interacts with (S)-2,3,4,5-tetrahydrodipicolinate. The active-site Proton donor is Lys150. Gly156–Thr157 lines the (S)-2,3,4,5-tetrahydrodipicolinate pocket.

Belongs to the DapB family.

The protein localises to the cytoplasm. It catalyses the reaction (S)-2,3,4,5-tetrahydrodipicolinate + NAD(+) + H2O = (2S,4S)-4-hydroxy-2,3,4,5-tetrahydrodipicolinate + NADH + H(+). The catalysed reaction is (S)-2,3,4,5-tetrahydrodipicolinate + NADP(+) + H2O = (2S,4S)-4-hydroxy-2,3,4,5-tetrahydrodipicolinate + NADPH + H(+). It participates in amino-acid biosynthesis; L-lysine biosynthesis via DAP pathway; (S)-tetrahydrodipicolinate from L-aspartate: step 4/4. Catalyzes the conversion of 4-hydroxy-tetrahydrodipicolinate (HTPA) to tetrahydrodipicolinate. The sequence is that of 4-hydroxy-tetrahydrodipicolinate reductase from Methanoculleus marisnigri (strain ATCC 35101 / DSM 1498 / JR1).